The sequence spans 338 residues: Ketol-acid reductoisomerase (NADP(+)) (338 aa).

A KARI N-terminal Rossmann domain is found at 1-181; it reads MKVFYDKDCD…GGGRTGIIET (181 aa). NADP(+) is bound by residues 24-27, Arg47, Ser50, Thr52, and 82-85; these read YGSQ and DEFQ. Residue His107 is part of the active site. Residue Gly133 coordinates NADP(+). The KARI C-terminal knotted domain occupies 182–327; it reads TFKDETETDL…EKLRSMMPWI (146 aa). Residues Asp190, Glu194, Glu226, and Glu230 each contribute to the Mg(2+) site. Residue Ser251 coordinates substrate.

The protein belongs to the ketol-acid reductoisomerase family. Requires Mg(2+) as cofactor.

It carries out the reaction (2R)-2,3-dihydroxy-3-methylbutanoate + NADP(+) = (2S)-2-acetolactate + NADPH + H(+). The enzyme catalyses (2R,3R)-2,3-dihydroxy-3-methylpentanoate + NADP(+) = (S)-2-ethyl-2-hydroxy-3-oxobutanoate + NADPH + H(+). It participates in amino-acid biosynthesis; L-isoleucine biosynthesis; L-isoleucine from 2-oxobutanoate: step 2/4. It functions in the pathway amino-acid biosynthesis; L-valine biosynthesis; L-valine from pyruvate: step 2/4. In terms of biological role, involved in the biosynthesis of branched-chain amino acids (BCAA). Catalyzes an alkyl-migration followed by a ketol-acid reduction of (S)-2-acetolactate (S2AL) to yield (R)-2,3-dihydroxy-isovalerate. In the isomerase reaction, S2AL is rearranged via a Mg-dependent methyl migration to produce 3-hydroxy-3-methyl-2-ketobutyrate (HMKB). In the reductase reaction, this 2-ketoacid undergoes a metal-dependent reduction by NADPH to yield (R)-2,3-dihydroxy-isovalerate. This is Ketol-acid reductoisomerase (NADP(+)) from Pseudomonas syringae pv. tomato (strain ATCC BAA-871 / DC3000).